The sequence spans 674 residues: Probable potassium transport system protein Kup (674 aa).

A run of 12 helical transmembrane segments spans residues 7-27, 52-72, 95-115, 145-165, 169-189, 204-224, 244-264, 291-311, 342-362, 368-388, 397-417, and 425-445; these read IFWG…TSPL, LSLV…LIAL, WLIL…TLTP, LVTF…TSFI, FGPL…VNLI, LMLL…SVFL, IYLT…GQGA, VYLF…QALI, IYIR…LVYF, MEAA…ILLS, VVFN…FLIS, and GGYV…IWYF.

This sequence belongs to the HAK/KUP transporter (TC 2.A.72) family.

The protein localises to the cell membrane. The enzyme catalyses K(+)(in) + H(+)(in) = K(+)(out) + H(+)(out). Functionally, transport of potassium into the cell. Likely operates as a K(+):H(+) symporter. The polypeptide is Probable potassium transport system protein Kup (Ligilactobacillus salivarius (strain UCC118) (Lactobacillus salivarius)).